A 601-amino-acid chain; its full sequence is Glutathione-regulated potassium-efflux system protein KefB (601 aa).

Transmembrane regions (helical) follow at residues S4–A24, I29–F49, E55–L75, I87–M107, A115–M135, V152–G172, H177–G197, F207–G227, L230–L250, G268–Y288, L291–L311, M324–A344, and A356–V376. Residues K400–T519 enclose the RCK N-terminal domain.

Belongs to the monovalent cation:proton antiporter 2 (CPA2) transporter (TC 2.A.37) family. KefB subfamily. In terms of assembly, interacts with the regulatory subunit KefG.

The protein localises to the cell inner membrane. Functionally, pore-forming subunit of a potassium efflux system that confers protection against electrophiles. Catalyzes K(+)/H(+) antiport. This chain is Glutathione-regulated potassium-efflux system protein KefB, found in Escherichia coli (strain SMS-3-5 / SECEC).